The following is a 509-amino-acid chain: Bifunctional purine biosynthesis protein PurH (509 aa).

In terms of domain architecture, MGS-like spans 1–144 (MKRALISVSD…KNYAAVTVVV (144 aa)).

This sequence belongs to the PurH family.

It carries out the reaction (6R)-10-formyltetrahydrofolate + 5-amino-1-(5-phospho-beta-D-ribosyl)imidazole-4-carboxamide = 5-formamido-1-(5-phospho-D-ribosyl)imidazole-4-carboxamide + (6S)-5,6,7,8-tetrahydrofolate. It catalyses the reaction IMP + H2O = 5-formamido-1-(5-phospho-D-ribosyl)imidazole-4-carboxamide. It functions in the pathway purine metabolism; IMP biosynthesis via de novo pathway; 5-formamido-1-(5-phospho-D-ribosyl)imidazole-4-carboxamide from 5-amino-1-(5-phospho-D-ribosyl)imidazole-4-carboxamide (10-formyl THF route): step 1/1. The protein operates within purine metabolism; IMP biosynthesis via de novo pathway; IMP from 5-formamido-1-(5-phospho-D-ribosyl)imidazole-4-carboxamide: step 1/1. The protein is Bifunctional purine biosynthesis protein PurH of Listeria monocytogenes serovar 1/2a (strain ATCC BAA-679 / EGD-e).